Consider the following 305-residue polypeptide: Ornithine carbamoyltransferase, anabolic (305 aa).

Carbamoyl phosphate is bound by residues Ser-53 to Thr-56, Gln-80, Arg-104, and His-131 to Gln-134. L-ornithine-binding positions include Asn-162, Asp-219, and Ser-223–Met-224. Residues Cys-259 to Leu-260 and Arg-287 each bind carbamoyl phosphate.

It belongs to the aspartate/ornithine carbamoyltransferase superfamily. OTCase family. As to quaternary structure, homotrimer.

The protein localises to the cytoplasm. It catalyses the reaction carbamoyl phosphate + L-ornithine = L-citrulline + phosphate + H(+). It participates in amino-acid biosynthesis; L-arginine biosynthesis; L-arginine from L-ornithine and carbamoyl phosphate: step 1/3. Functionally, reversibly catalyzes the transfer of the carbamoyl group from carbamoyl phosphate (CP) to the N(epsilon) atom of ornithine (ORN) to produce L-citrulline, which is a substrate for argininosuccinate synthetase (ArgG) involved in the final step in arginine biosynthesis. The polypeptide is Ornithine carbamoyltransferase, anabolic (Pseudomonas aeruginosa (strain ATCC 15692 / DSM 22644 / CIP 104116 / JCM 14847 / LMG 12228 / 1C / PRS 101 / PAO1)).